The chain runs to 348 residues: S-adenosylmethionine:tRNA ribosyltransferase-isomerase (348 aa).

Belongs to the QueA family. As to quaternary structure, monomer.

The protein resides in the cytoplasm. It catalyses the reaction 7-aminomethyl-7-carbaguanosine(34) in tRNA + S-adenosyl-L-methionine = epoxyqueuosine(34) in tRNA + adenine + L-methionine + 2 H(+). Its pathway is tRNA modification; tRNA-queuosine biosynthesis. In terms of biological role, transfers and isomerizes the ribose moiety from AdoMet to the 7-aminomethyl group of 7-deazaguanine (preQ1-tRNA) to give epoxyqueuosine (oQ-tRNA). The polypeptide is S-adenosylmethionine:tRNA ribosyltransferase-isomerase (Tolumonas auensis (strain DSM 9187 / NBRC 110442 / TA 4)).